The following is a 52-amino-acid chain: Superoxide dismutase [Cu-Zn] 2 (52 aa).

Residue His-44 participates in Cu cation binding.

The protein belongs to the Cu-Zn superoxide dismutase family. Homodimer. Requires Cu cation as cofactor. It depends on Zn(2+) as a cofactor.

It is found in the cytoplasm. The enzyme catalyses 2 superoxide + 2 H(+) = H2O2 + O2. Functionally, destroys radicals which are normally produced within the cells and which are toxic to biological systems. This is Superoxide dismutase [Cu-Zn] 2 from Debaryomyces hansenii (Yeast).